The following is a 112-amino-acid chain: Putative pterin-4-alpha-carbinolamine dehydratase (112 aa).

It belongs to the pterin-4-alpha-carbinolamine dehydratase family.

The enzyme catalyses (4aS,6R)-4a-hydroxy-L-erythro-5,6,7,8-tetrahydrobiopterin = (6R)-L-erythro-6,7-dihydrobiopterin + H2O. This Shewanella sp. (strain ANA-3) protein is Putative pterin-4-alpha-carbinolamine dehydratase.